The sequence spans 91 residues: LYR motif-containing protein 4 (91 aa).

Residues Arg-6 and Lys-44 each coordinate pantetheine 4'-phosphate. Position 47 is an N6-succinyllysine (Lys-47).

Belongs to the complex I LYR family. Homodimer. Component of the mitochondrial core iron-sulfur cluster (ISC) complex composed of NFS1, LYRM4, NDUFAB1, ISCU, FXN, and FDX2; this complex is a heterohexamer containing two copies of each monomer. Component of the cyteine desulfurase complex composed of NFS1, LYRM4 and NDUFAB1; this complex contributes to the stability and cysteine desulfurase activity of NFS1. Interacts with FXN; this interaction is nickel-dependent. Interacts with the cytoplasmic form of NFS1; the complex increases the stability of NFS1. Forms a complex with the cytoplasmic form of NFS1; this complex increases the stability and cysteine desulfurase activity of NFS1. Interacts with NFS1.

It localises to the mitochondrion. The protein localises to the nucleus. Its pathway is cofactor biosynthesis; iron-sulfur cluster biosynthesis. Its function is as follows. Stabilizing factor, of the core iron-sulfur cluster (ISC) assembly complex, that regulates, in association with NDUFAB1, the stability and the cysteine desulfurase activity of NFS1 and participates in the [2Fe-2S] clusters assembly on the scaffolding protein ISCU. The core iron-sulfur cluster (ISC) assembly complex is involved in the de novo synthesis of a [2Fe-2S] cluster, the first step of the mitochondrial iron-sulfur protein biogenesis. This process is initiated by the cysteine desulfurase complex (NFS1:LYRM4:NDUFAB1) that produces persulfide which is delivered on the scaffold protein ISCU in a FXN-dependent manner. Then this complex is stabilized by FDX2 which provides reducing equivalents to accomplish the [2Fe-2S] cluster assembly. Finally, the [2Fe-2S] cluster is transferred from ISCU to chaperone proteins, including HSCB, HSPA9 and GLRX5. May also participates in the iron-sulfur protein biogenesis in the cytoplasm through its interaction with the cytoplasmic form of NFS1. This Bos taurus (Bovine) protein is LYR motif-containing protein 4.